Reading from the N-terminus, the 365-residue chain is Putative agmatine deiminase (365 aa).

The active-site Amidino-cysteine intermediate is Cys-357.

This sequence belongs to the agmatine deiminase family.

The enzyme catalyses agmatine + H2O = N-carbamoylputrescine + NH4(+). This Yersinia pseudotuberculosis serotype O:1b (strain IP 31758) protein is Putative agmatine deiminase.